A 799-amino-acid polypeptide reads, in one-letter code: Dipeptidyl peptidase family member 1 (799 aa).

Topologically, residues 1–31 are cytoplasmic; it reads MTAEADLLEGYDEELGGNESQKRDCKGITTA. The helical; Signal-anchor for type II membrane protein transmembrane segment at 32–52 threads the bilayer; that stretch reads IVVVLLILVMIFAALVFFTPL. The Lumenal segment spans residues 53-799; the sequence is FAAKSFGSWR…FLRQCFYTDK (747 aa). N-linked (GlcNAc...) asparagine glycans are attached at residues asparagine 64, asparagine 138, asparagine 267, and asparagine 335. A disulfide bridge connects residues cysteine 474 and cysteine 477. N-linked (GlcNAc...) asparagine glycosylation occurs at asparagine 481. Residues cysteine 482 and cysteine 500 are joined by a disulfide bond. Asparagine 512 is a glycosylation site (N-linked (GlcNAc...) asparagine). Residues serine 669, aspartate 742, and histidine 774 each act as charge relay system in the active site. A disulfide bridge connects residues cysteine 689 and cysteine 794.

It belongs to the peptidase S9B family. DPPIV subfamily.

It is found in the cell membrane. Its function is as follows. Removes N-terminal dipeptides sequentially from polypeptides. Essential for control of distal tip cell migration. This is Dipeptidyl peptidase family member 1 (dpf-1) from Caenorhabditis elegans.